Consider the following 835-residue polypeptide: Protein bicaudal D homolog 1 (835 aa).

A coiled-coil region spans residues 1 to 264 (MAAEEALKTV…YINLSDSHIS (264 aa)). Residues 278–297 (EPNNDDKMNGHIHGPLGKLN) form a disordered region. A coiled-coil region spans residues 320–519 (ELNISEIQKL…TFSEELAQLY (200 aa)). 2 disordered regions span residues 545–616 (RSGS…LDTS) and 800–835 (DHEQ…SAHN). Over residues 557–572 (GLLSPRLSRRGVSSPV) the composition is skewed to low complexity. The segment covering 581–590 (VSKENTETSK) has biased composition (basic and acidic residues). Residues 591–604 (EPSPTKTPTISPVI) are compositionally biased toward low complexity. The stretch at 663 to 803 (IDKDKEALME…LEDLEFDHEQ (141 aa)) forms a coiled coil. Positions 663–803 (IDKDKEALME…LEDLEFDHEQ (141 aa)) are interaction with RAB6A.

The protein belongs to the BicD family. In terms of assembly, interacts with RAB6A. Interacts (via C-terminus) with RAB6B (GTP-bound); the interaction is direct. Interacts with CLIP-115 and KIFC2. As to expression, expressed in the brain, heart and skeletal muscle.

Its subcellular location is the golgi apparatus. Regulates coat complex coatomer protein I (COPI)-independent Golgi-endoplasmic reticulum transport by recruiting the dynein-dynactin motor complex. This Mus musculus (Mouse) protein is Protein bicaudal D homolog 1 (Bicd1).